Consider the following 380-residue polypeptide: Cytochrome b (380 aa).

The next 4 helical transmembrane spans lie at 34-54 (FGSL…LLAT), 78-99 (WLIR…YLHI), 114-134 (WNTG…GYVL), and 179-199 (FFAL…THLT). Heme b-binding residues include histidine 84 and histidine 98. The heme b site is built by histidine 183 and histidine 197. A ubiquinone is bound at residue histidine 202. 4 consecutive transmembrane segments (helical) span residues 227–247 (PKDL…ALFS), 289–309 (LGGV…PFLH), 321–341 (LSQL…WVGS), and 348–368 (FIII…ILFP).

It belongs to the cytochrome b family. The cytochrome bc1 complex contains 11 subunits: 3 respiratory subunits (MT-CYB, CYC1 and UQCRFS1), 2 core proteins (UQCRC1 and UQCRC2) and 6 low-molecular weight proteins (UQCRH/QCR6, UQCRB/QCR7, UQCRQ/QCR8, UQCR10/QCR9, UQCR11/QCR10 and a cleavage product of UQCRFS1). This cytochrome bc1 complex then forms a dimer. Requires heme b as cofactor.

The protein resides in the mitochondrion inner membrane. In terms of biological role, component of the ubiquinol-cytochrome c reductase complex (complex III or cytochrome b-c1 complex) that is part of the mitochondrial respiratory chain. The b-c1 complex mediates electron transfer from ubiquinol to cytochrome c. Contributes to the generation of a proton gradient across the mitochondrial membrane that is then used for ATP synthesis. In Todus todus (Jamaican tody), this protein is Cytochrome b (MT-CYB).